The primary structure comprises 307 residues: Small ribosomal subunit biogenesis GTPase RsgA (307 aa).

Residues 80–237 enclose the CP-type G domain; the sequence is KVDLRQAIVS…IVDTPGIKEF (158 aa). GTP contacts are provided by residues 129 to 132 and 180 to 188; these read NKID and GQSGVGKSS. Zn(2+)-binding residues include Cys-261, Cys-266, His-268, and Cys-274.

It belongs to the TRAFAC class YlqF/YawG GTPase family. RsgA subfamily. As to quaternary structure, monomer. Associates with 30S ribosomal subunit, binds 16S rRNA. The cofactor is Zn(2+).

It localises to the cytoplasm. Functionally, one of several proteins that assist in the late maturation steps of the functional core of the 30S ribosomal subunit. Helps release RbfA from mature subunits. May play a role in the assembly of ribosomal proteins into the subunit. Circularly permuted GTPase that catalyzes slow GTP hydrolysis, GTPase activity is stimulated by the 30S ribosomal subunit. This is Small ribosomal subunit biogenesis GTPase RsgA from Borrelia garinii subsp. bavariensis (strain ATCC BAA-2496 / DSM 23469 / PBi) (Borreliella bavariensis).